Reading from the N-terminus, the 87-residue chain is Kappa-4-bungarotoxin (87 aa).

An N-terminal signal peptide occupies residues 1-21; that stretch reads MKTLLLTLVVVTIVCLDLGYT. 5 cysteine pairs are disulfide-bonded: cysteine 24-cysteine 42, cysteine 35-cysteine 63, cysteine 48-cysteine 52, cysteine 67-cysteine 79, and cysteine 80-cysteine 85.

It belongs to the three-finger toxin family. Long-chain subfamily. Kappa-neurotoxin sub-subfamily. Homo- and heterodimer; non-covalently linked. Expressed by the venom gland.

It is found in the secreted. Postsynaptic neurotoxin that binds and inhibits neuronal nicotinic acetylcholine receptors (nAChR) with high affinity (IC(50)&lt;100 nM). Is a selective, and slowly reversible antagonist of alpha-3/CHRNA3-containing and some alpha-4/CHRNA4-containing AChRs. This is Kappa-4-bungarotoxin from Bungarus multicinctus (Many-banded krait).